The primary structure comprises 371 residues: Transaldolase (371 aa).

Lys-140 acts as the Schiff-base intermediate with substrate in catalysis.

It belongs to the transaldolase family. Type 2 subfamily.

The protein resides in the cytoplasm. The catalysed reaction is D-sedoheptulose 7-phosphate + D-glyceraldehyde 3-phosphate = D-erythrose 4-phosphate + beta-D-fructose 6-phosphate. The protein operates within carbohydrate degradation; pentose phosphate pathway; D-glyceraldehyde 3-phosphate and beta-D-fructose 6-phosphate from D-ribose 5-phosphate and D-xylulose 5-phosphate (non-oxidative stage): step 2/3. Transaldolase is important for the balance of metabolites in the pentose-phosphate pathway. The polypeptide is Transaldolase (Arthrobacter sp. (strain FB24)).